Reading from the N-terminus, the 303-residue chain is Glutathione transport system permease protein GsiD (303 aa).

6 consecutive transmembrane segments (helical) span residues 40 to 60 (AMTA…ARWI), 105 to 125 (LAAG…LGLL), 144 to 164 (LFAF…GSGI), 165 to 185 (ANVI…LVRG), 222 to 242 (IVVF…SLSF), and 266 to 286 (VIAP…VLAF). The ABC transmembrane type-1 domain maps to 101–290 (AQISLAAGVF…LTVLAFNLLG (190 aa)).

It belongs to the binding-protein-dependent transport system permease family. In terms of assembly, the complex is composed of two ATP-binding proteins (GsiA), two transmembrane proteins (GsiC and GsiD) and a solute-binding protein (GsiB).

It is found in the cell inner membrane. Its function is as follows. Part of the ABC transporter complex GsiABCD involved in glutathione import. Probably responsible for the translocation of the substrate across the membrane. The protein is Glutathione transport system permease protein GsiD of Escherichia coli O157:H7.